A 308-amino-acid polypeptide reads, in one-letter code: Methionyl-tRNA formyltransferase (308 aa).

110 to 113 (SLLP) is a (6S)-5,6,7,8-tetrahydrofolate binding site.

It belongs to the Fmt family.

The catalysed reaction is L-methionyl-tRNA(fMet) + (6R)-10-formyltetrahydrofolate = N-formyl-L-methionyl-tRNA(fMet) + (6S)-5,6,7,8-tetrahydrofolate + H(+). Its function is as follows. Attaches a formyl group to the free amino group of methionyl-tRNA(fMet). The formyl group appears to play a dual role in the initiator identity of N-formylmethionyl-tRNA by promoting its recognition by IF2 and preventing the misappropriation of this tRNA by the elongation apparatus. This Neisseria gonorrhoeae (strain ATCC 700825 / FA 1090) protein is Methionyl-tRNA formyltransferase.